A 314-amino-acid polypeptide reads, in one-letter code: Homoserine kinase (314 aa).

Pro95–Ser105 is a binding site for ATP.

This sequence belongs to the GHMP kinase family. Homoserine kinase subfamily.

It is found in the cytoplasm. The catalysed reaction is L-homoserine + ATP = O-phospho-L-homoserine + ADP + H(+). It functions in the pathway amino-acid biosynthesis; L-threonine biosynthesis; L-threonine from L-aspartate: step 4/5. Catalyzes the ATP-dependent phosphorylation of L-homoserine to L-homoserine phosphate. The sequence is that of Homoserine kinase from Mycobacterium ulcerans (strain Agy99).